The chain runs to 729 residues: Elongation factor 2 (729 aa).

Residues 19 to 262 form the tr-type G domain; the sequence is EQIRNIAIAA…MVCEHFPNPV (244 aa). GTP-binding positions include 28–35, 94–98, and 148–151; these read AHVDHGKT, DTPGH, and NKVD. The residue at position 597 (histidine 597) is a Diphthamide.

This sequence belongs to the TRAFAC class translation factor GTPase superfamily. Classic translation factor GTPase family. EF-G/EF-2 subfamily.

Its subcellular location is the cytoplasm. Its function is as follows. Catalyzes the GTP-dependent ribosomal translocation step during translation elongation. During this step, the ribosome changes from the pre-translocational (PRE) to the post-translocational (POST) state as the newly formed A-site-bound peptidyl-tRNA and P-site-bound deacylated tRNA move to the P and E sites, respectively. Catalyzes the coordinated movement of the two tRNA molecules, the mRNA and conformational changes in the ribosome. This is Elongation factor 2 from Natronomonas pharaonis (strain ATCC 35678 / DSM 2160 / CIP 103997 / JCM 8858 / NBRC 14720 / NCIMB 2260 / Gabara) (Halobacterium pharaonis).